The primary structure comprises 299 residues: Oxygen-dependent coproporphyrinogen-III oxidase (299 aa).

Substrate is bound at residue Ser92. Residues His96 and His106 each coordinate Mn(2+). Catalysis depends on His106, which acts as the Proton donor. Residue 108–110 (NVR) participates in substrate binding. Residues His145 and His175 each contribute to the Mn(2+) site. The tract at residues 240-275 (YVEFNLVWDRGTLFGLQTGGRTESILMSMPPLVRWE) is important for dimerization. 258-260 (GGR) is a binding site for substrate.

The protein belongs to the aerobic coproporphyrinogen-III oxidase family. As to quaternary structure, homodimer. Mn(2+) is required as a cofactor.

The protein localises to the cytoplasm. It catalyses the reaction coproporphyrinogen III + O2 + 2 H(+) = protoporphyrinogen IX + 2 CO2 + 2 H2O. Its pathway is porphyrin-containing compound metabolism; protoporphyrin-IX biosynthesis; protoporphyrinogen-IX from coproporphyrinogen-III (O2 route): step 1/1. Involved in the heme biosynthesis. Catalyzes the aerobic oxidative decarboxylation of propionate groups of rings A and B of coproporphyrinogen-III to yield the vinyl groups in protoporphyrinogen-IX. The sequence is that of Oxygen-dependent coproporphyrinogen-III oxidase from Escherichia coli O8 (strain IAI1).